A 136-amino-acid chain; its full sequence is Cyclase aurE (136 aa).

Belongs to the aurE cyclase family.

Its pathway is polyketide biosynthesis. Its function is as follows. Cyclase; part of the gene cluster that mediates the biosynthesis of aurovertins, fungal polyketides that exhibit potent inhibition of adenosine triphosphate synthase. Tha biosynthesis starts with the HR-PKS aurA that selects propionate as the starter unit; synthesizes a hexa-ene chain through the repeated functions of the KR and DH domains in the first six iterations; selectively introduces three alpha-methyl substitutions at C4, C6, and C16 using the S-adensylmethionine-dependent cMET; and shuts off KR and DH in the last three iterations to afford a 1,3,5-triketo portion that can undergo intramolecular cyclization to yield the alpha-pyrone intermediate. AurE may act as a cyclase and enhances the rate of pyrone formation and product release of aurA. The methyltransferase aurB then methylates the C17 hydroxyl group. C17 methylation is required to initiate epoxidation by the downstream monooxygenase aurC. The monooxygenase aurC and the epoxide hydrolase aurD can iteratively transform the terminal triene portion of the methylated precursor into the dioxabicyclo[3.2.1]octane scaffold of aurovertin E. Epoxidation modifications of the precursor occur in two separate steps; bis-epoxidation of the two terminal olefins takes place first, followed by another epoxidation that occurs at C7-C8 after tetrahydrofuran formation. The O-acyltransferase aurG converts aurovertin E to aurovertin A. The protein is Cyclase aurE of Calcarisporium arbuscula (Dendryphion arbuscula).